Reading from the N-terminus, the 43-residue chain is Protein PsbN (43 aa).

The helical transmembrane segment at 7–29 (VTIFLSGLLVSFTGYALYTAFGQ) threads the bilayer.

It belongs to the PsbN family.

Its subcellular location is the plastid. It is found in the chloroplast thylakoid membrane. May play a role in photosystem I and II biogenesis. The polypeptide is Protein PsbN (Ipomoea purpurea (Common morning glory)).